The following is a 324-amino-acid chain: tRNA N6-adenosine threonylcarbamoyltransferase (324 aa).

Fe cation is bound by residues histidine 107, histidine 111, and tyrosine 127. Substrate contacts are provided by residues 127 to 131, aspartate 159, glycine 172, glutamate 176, and asparagine 257; that span reads YVSGG. A Fe cation-binding site is contributed by aspartate 285.

This sequence belongs to the KAE1 / TsaD family. In terms of assembly, monomer. Component of the KEOPS complex that consists of Kae1, Bud32, Cgi121 and Pcc1; the whole complex dimerizes. The cofactor is Fe(2+).

The protein localises to the cytoplasm. It catalyses the reaction L-threonylcarbamoyladenylate + adenosine(37) in tRNA = N(6)-L-threonylcarbamoyladenosine(37) in tRNA + AMP + H(+). Required for the formation of a threonylcarbamoyl group on adenosine at position 37 (t(6)A37) in tRNAs that read codons beginning with adenine. Is a component of the KEOPS complex that is probably involved in the transfer of the threonylcarbamoyl moiety of threonylcarbamoyl-AMP (TC-AMP) to the N6 group of A37. Kae1 likely plays a direct catalytic role in this reaction, but requires other protein(s) of the complex to fulfill this activity. The sequence is that of tRNA N6-adenosine threonylcarbamoyltransferase from Pyrococcus horikoshii (strain ATCC 700860 / DSM 12428 / JCM 9974 / NBRC 100139 / OT-3).